We begin with the raw amino-acid sequence, 520 residues long: TnpB-like protein L770 (520 aa).

A disordered region spans residues 23-44 (KTKKKVFVKKKPPDKKPLKKPV). Residues cysteine 474, cysteine 477, cysteine 491, and cysteine 494 each contribute to the Zn(2+) site.

In the central section; belongs to the transposase 2 family. It in the C-terminal section; belongs to the transposase 35 family.

This chain is TnpB-like protein L770, found in Acanthamoeba polyphaga mimivirus (APMV).